The following is a 295-amino-acid chain: Ribosomal protein L11 methyltransferase (295 aa).

S-adenosyl-L-methionine contacts are provided by Thr-150, Gly-171, Asp-193, and Asn-232.

The protein belongs to the methyltransferase superfamily. PrmA family.

The protein localises to the cytoplasm. The enzyme catalyses L-lysyl-[protein] + 3 S-adenosyl-L-methionine = N(6),N(6),N(6)-trimethyl-L-lysyl-[protein] + 3 S-adenosyl-L-homocysteine + 3 H(+). Functionally, methylates ribosomal protein L11. This chain is Ribosomal protein L11 methyltransferase, found in Neisseria meningitidis serogroup B (strain ATCC BAA-335 / MC58).